Here is a 341-residue protein sequence, read N- to C-terminus: L-threonine 3-dehydrogenase (341 aa).

Position 38 (cysteine 38) interacts with Zn(2+). Active-site charge relay system residues include threonine 40 and histidine 43. Zn(2+)-binding residues include histidine 63, glutamate 64, cysteine 93, cysteine 96, cysteine 99, and cysteine 107. NAD(+) is bound by residues isoleucine 175, aspartate 195, arginine 200, 262-264 (LGI), and 286-287 (IY).

The protein belongs to the zinc-containing alcohol dehydrogenase family. In terms of assembly, homotetramer. It depends on Zn(2+) as a cofactor.

The protein localises to the cytoplasm. The catalysed reaction is L-threonine + NAD(+) = (2S)-2-amino-3-oxobutanoate + NADH + H(+). It functions in the pathway amino-acid degradation; L-threonine degradation via oxydo-reductase pathway; glycine from L-threonine: step 1/2. Functionally, catalyzes the NAD(+)-dependent oxidation of L-threonine to 2-amino-3-ketobutyrate. The sequence is that of L-threonine 3-dehydrogenase from Shewanella pealeana (strain ATCC 700345 / ANG-SQ1).